Consider the following 129-residue polypeptide: Small ribosomal subunit protein uS9 (129 aa).

This sequence belongs to the universal ribosomal protein uS9 family.

In Helicobacter hepaticus (strain ATCC 51449 / 3B1), this protein is Small ribosomal subunit protein uS9.